The chain runs to 165 residues: Growth arrest and DNA damage-inducible protein GADD45 alpha (165 aa).

Position 2 is a phosphothreonine (T2).

This sequence belongs to the GADD45 family. In terms of assembly, interacts with AURKA, PCNA, GADD45GIP1 and MAPK14.

It is found in the nucleus. Its function is as follows. Might affect PCNA interaction with some CDK (cell division protein kinase) complexes; stimulates DNA excision repair in vitro and inhibits entry of cells into S phase. In T-cells, functions as a regulator of p38 MAPKs by inhibiting p88 phosphorylation and activity. The protein is Growth arrest and DNA damage-inducible protein GADD45 alpha (GADD45A) of Cricetulus griseus (Chinese hamster).